Here is a 152-residue protein sequence, read N- to C-terminus: Aspartate carbamoyltransferase regulatory chain (152 aa).

Residues Cys-108, Cys-113, Cys-136, and Cys-139 each contribute to the Zn(2+) site.

Belongs to the PyrI family. Contains catalytic and regulatory chains. The cofactor is Zn(2+).

Its function is as follows. Involved in allosteric regulation of aspartate carbamoyltransferase. In Pyrococcus furiosus (strain ATCC 43587 / DSM 3638 / JCM 8422 / Vc1), this protein is Aspartate carbamoyltransferase regulatory chain.